Here is a 544-residue protein sequence, read N- to C-terminus: Ell-associated factor Eaf (544 aa).

Residues 147–544 form a disordered region; it reads QSVPMNMGHQ…LSSNSSDDDD (398 aa). Positions 193–202 are enriched in basic and acidic residues; that stretch reads SSKDKVDFKP. The residue at position 205 (serine 205) is a Phosphoserine. Positions 264-273 are enriched in low complexity; the sequence is SGSSTGSSSG. Residues 287 to 299 show a composition bias toward basic residues; the sequence is GKQRQAHGKRQQI. 3 stretches are compositionally biased toward low complexity: residues 305 to 319, 333 to 374, and 396 to 407; these read PPVQ…QQQP, QPHP…QQRP, and ASQSVAQAAAVL. Positions 425-440 are enriched in acidic residues; it reads DSSDSDSGSDSDDSTE. Composition is skewed to low complexity over residues 450–483, 503–513, and 526–544; these read EQQQ…HMNQ, QQPQPQPQQQQ, and NDLL…DDDD.

This sequence belongs to the EAF family.

The protein localises to the nucleus. In terms of biological role, promotes transcriptional elongation by Su(Tpl)/ELL. Essential for development. The chain is Ell-associated factor Eaf from Drosophila persimilis (Fruit fly).